The sequence spans 475 residues: Protein EARLY HEADING DATE 2 (475 aa).

Residues 1–16 are compositionally biased toward polar residues; sequence MLLSDLSSDQEATGSN. The segment at 1–26 is disordered; that stretch reads MLLSDLSSDQEATGSNSHGGGGGDRM. C2H2-type zinc fingers lie at residues 105–127 and 155–185; these read FVCE…RRGH and YVCP…SRKH. Short sequence motifs (nuclear localization signal) lie at residues 123 to 130 and 177 to 184; these read HRRGHNLP and IKKHFSRK. A C2H2-type 2; degenerate zinc finger spans residues 190 to 213; the sequence is WRCERCGKRYAVHSDWKAHVKNCG. Residues Cys-192, Cys-195, His-208, Cys-212, Cys-219, Cys-221, His-234, and Cys-238 each coordinate Zn(2+). The CCHC-type 2; atypical zinc finger occupies 217–240; it reads YRCDCGILFSRKDSLLTHRAFCDA. The SHR-binding stretch occupies residues 227–239; sequence RKDSLLTHRAFCD.

As to expression, mostly expressed in developing leaves (more in sheaths than in blades, especially in the outer epidermal cell of immature leaves and in the region immediately beneath the meristem where internodes are visible) and panicles, and, at very low levels, around the shoot apex and in roots.

The protein localises to the nucleus. In terms of biological role, transcription activator that acts as a flowering master switch in both long and short days, independently of the circadian clock. Promotes flowering upstream of HD1 by up-regulating FTL1, FTL4, FTL5, FTL6, EHD1, HD3A and RFT1. Seems to repress FTL11 expression. May recognize the consensus motif 5'-TTTGTCGTAAT-3' in target gene promoters. The chain is Protein EARLY HEADING DATE 2 from Oryza sativa subsp. japonica (Rice).